A 444-amino-acid polypeptide reads, in one-letter code: Phosphoglucosamine mutase (444 aa).

The active-site Phosphoserine intermediate is Ser-99. Residues Ser-99, Asp-242, Asp-244, and Asp-246 each coordinate Mg(2+). A Phosphoserine modification is found at Ser-99.

This sequence belongs to the phosphohexose mutase family. Mg(2+) is required as a cofactor. In terms of processing, activated by phosphorylation.

It carries out the reaction alpha-D-glucosamine 1-phosphate = D-glucosamine 6-phosphate. Functionally, catalyzes the conversion of glucosamine-6-phosphate to glucosamine-1-phosphate. The sequence is that of Phosphoglucosamine mutase from Aliarcobacter butzleri (strain RM4018) (Arcobacter butzleri).